The following is a 212-amino-acid chain: Mediator of RNA polymerase II transcription subunit 20 (212 aa).

This sequence belongs to the Mediator complex subunit 20 family. Component of the Mediator complex, which is composed of MED1, MED4, MED6, MED7, MED8, MED9, MED10, MED11, MED12, MED13, MED13L, MED14, MED15, MED16, MED17, MED18, MED19, MED20, MED21, MED22, MED23, MED24, MED25, MED26, MED27, MED29, MED30, MED31, CCNC, CDK8 and CDC2L6/CDK11. The MED12, MED13, CCNC and CDK8 subunits form a distinct module termed the CDK8 module. Mediator containing the CDK8 module is less active than Mediator lacking this module in supporting transcriptional activation. Individual preparations of the Mediator complex lacking one or more distinct subunits have been variously termed ARC, CRSP, DRIP, PC2, SMCC and TRAP. Interacts with PPARG.

The protein resides in the nucleus. Component of the Mediator complex, a coactivator involved in the regulated transcription of nearly all RNA polymerase II-dependent genes. Mediator functions as a bridge to convey information from gene-specific regulatory proteins to the basal RNA polymerase II transcription machinery. Mediator is recruited to promoters by direct interactions with regulatory proteins and serves as a scaffold for the assembly of a functional preinitiation complex with RNA polymerase II and the general transcription factors. This Rattus norvegicus (Rat) protein is Mediator of RNA polymerase II transcription subunit 20 (Med20).